A 493-amino-acid chain; its full sequence is Cytochrome P450 2A9 (493 aa).

Cysteine 438 serves as a coordination point for heme.

It belongs to the cytochrome P450 family. Requires heme as cofactor. As to expression, liver.

It is found in the endoplasmic reticulum membrane. It localises to the microsome membrane. It carries out the reaction an organic molecule + reduced [NADPH--hemoprotein reductase] + O2 = an alcohol + oxidized [NADPH--hemoprotein reductase] + H2O + H(+). Functionally, cytochromes P450 are a group of heme-thiolate monooxygenases. In liver microsomes, this enzyme is involved in an NADPH-dependent electron transport pathway. It oxidizes a variety of structurally unrelated compounds, including steroids, fatty acids, and xenobiotics. The protein is Cytochrome P450 2A9 (CYP2A9) of Mesocricetus auratus (Golden hamster).